A 546-amino-acid polypeptide reads, in one-letter code: Chaperonin GroEL (546 aa).

Residues 30 to 33 (TLGP), Lys-51, 87 to 91 (DGTTT), Gly-415, 479 to 481 (NAA), and Asp-495 contribute to the ATP site.

It belongs to the chaperonin (HSP60) family. In terms of assembly, forms a cylinder of 14 subunits composed of two heptameric rings stacked back-to-back. Interacts with the co-chaperonin GroES.

The protein resides in the cytoplasm. The enzyme catalyses ATP + H2O + a folded polypeptide = ADP + phosphate + an unfolded polypeptide.. Functionally, together with its co-chaperonin GroES, plays an essential role in assisting protein folding. The GroEL-GroES system forms a nano-cage that allows encapsulation of the non-native substrate proteins and provides a physical environment optimized to promote and accelerate protein folding. This is Chaperonin GroEL from Stutzerimonas stutzeri (strain A1501) (Pseudomonas stutzeri).